A 61-amino-acid chain; its full sequence is Alpha-conotoxin-like Tx1.2 (61 aa).

Positions 1 to 20 (MFTVFLLVVLATTVVSFTSG) are cleaved as a signal peptide. A propeptide spanning residues 21 to 42 (RSTFRGRNAAAKASGLVSLTDR) is cleaved from the precursor. 2 positions are modified to 4-hydroxyproline: proline 44 and proline 50. Intrachain disulfides connect cysteine 46-cysteine 52 and cysteine 47-cysteine 60. Residues 48–50 (SHP) are ser-Xaa-Pro motif, crucial for potent interaction with nAChR.

The protein belongs to the conotoxin A superfamily. As to expression, expressed by the venom duct.

The protein localises to the secreted. Functionally, alpha-conotoxins act on postsynaptic membranes, they bind to the nicotinic acetylcholine receptors (nAChR) and thus inhibit them. This toxin also inhibits high voltage-activated (HVA) calcium channel currents in rat DRG neurons (8% inhibition at 1 uM toxin) probably by activating GABA(B) receptors (GABBR1 and/or GABBR2). The sequence is that of Alpha-conotoxin-like Tx1.2 from Conus textile (Cloth-of-gold cone).